We begin with the raw amino-acid sequence, 655 residues long: Ubiquilin-3 (655 aa).

The Ubiquitin-like domain occupies 22–98 (IKVTVKTPKD…LVIKRQHRAM (77 aa)). The tract at residues 102–124 (CPAASVPTQGPSPGSLPQPSSIY) is disordered. The segment covering 110 to 122 (QGPSPGSLPQPSS) has biased composition (low complexity). Residues 194-233 (NPHMQQLIQHNPEIGHILNNPEIMRQTLEFLRNPAMMQEM) enclose the STI1 domain. Disordered stretches follow at residues 277-330 (PFAT…PDIR), 364-399 (ASALSQSQEPPPSVNRVPPSSPSSQEPGSGQPLPEE), and 412-447 (FLRYPTENSTGQGGDQDGAGKSSTGHSTNLPDLVSG). Residues 279–290 (ATATTDNATTTT) are compositionally biased toward low complexity. A compositionally biased stretch (basic and acidic residues) spans 318-330 (GRQDGDQDAPDIR). The span at 377–395 (VNRVPPSSPSSQEPGSGQP) shows a compositional bias: low complexity. The segment covering 432-441 (KSSTGHSTNL) has biased composition (polar residues). The UBA domain occupies 609–655 (QLQPEAHFQVQLEQLRSMGFLNREANLQALIATGGDVDAAVEKLRQS).

Testis specific.

In Homo sapiens (Human), this protein is Ubiquilin-3 (UBQLN3).